A 219-amino-acid polypeptide reads, in one-letter code: Proteasome subunit beta type-9 (219 aa).

The propeptide at 1–20 is removed in mature form; it reads MLRTGAPNGDLPRAGEVHTG. Thr21 serves as the catalytic Nucleophile. 2 positions are modified to N6-acetyllysine: Lys53 and Lys109.

It belongs to the peptidase T1B family. The 26S proteasome consists of a 20S proteasome core and two 19S regulatory subunits. The 20S proteasome core is composed of 28 subunits that are arranged in four stacked rings, resulting in a barrel-shaped structure. The two end rings are each formed by seven alpha subunits, and the two central rings are each formed by seven beta subunits. The catalytic chamber with the active sites is on the inside of the barrel. Component of the immunoproteasome, where it displaces the equivalent housekeeping subunit PSMB6. Component of the spermatoproteasome, a form of the proteasome specifically found in testis. Post-translationally, autocleaved. The resulting N-terminal Thr residue of the mature subunit is responsible for the nucleophile proteolytic activity.

It localises to the cytoplasm. The protein localises to the nucleus. The enzyme catalyses Cleavage of peptide bonds with very broad specificity.. The proteasome is a multicatalytic proteinase complex which is characterized by its ability to cleave peptides with Arg, Phe, Tyr, Leu, and Glu adjacent to the leaving group at neutral or slightly basic pH. The proteasome has an ATP-dependent proteolytic activity. This subunit is involved in antigen processing to generate class I binding peptides. The protein is Proteasome subunit beta type-9 (PSMB9) of Bos taurus (Bovine).